The following is a 169-amino-acid chain: Cell division inhibitor SulA (169 aa).

Residues 106–112 (ALRTGNY) form a ftsZ binding region. The lon protease binding stretch occupies residues 162–169 (KIHSNLYH).

It belongs to the SulA family. As to quaternary structure, interacts with FtsZ. In terms of processing, is rapidly cleaved and degraded by the Lon protease once DNA damage is repaired.

Functionally, component of the SOS system and an inhibitor of cell division. Accumulation of SulA causes rapid cessation of cell division and the appearance of long, non-septate filaments. In the presence of GTP, binds a polymerization-competent form of FtsZ in a 1:1 ratio, thus inhibiting FtsZ polymerization and therefore preventing it from participating in the assembly of the Z ring. This mechanism prevents the premature segregation of damaged DNA to daughter cells during cell division. The chain is Cell division inhibitor SulA from Escherichia coli O81 (strain ED1a).